Here is a 303-residue protein sequence, read N- to C-terminus: uncharacterized protein (303 aa).

The HTH araC/xylS-type domain occupies 183-281 (KDILFYLNNN…GCSPSDYRRQ (99 aa)). 2 DNA-binding regions (H-T-H motif) span residues 200 to 221 (EQLS…TKEY) and 248 to 271 (QAEI…LRHV).

This is an uncharacterized protein from Escherichia coli (strain K12).